A 208-amino-acid chain; its full sequence is Putative dioxygenase RF_0617 (208 aa).

The protein belongs to the intradiol ring-cleavage dioxygenase family.

In Rickettsia felis (strain ATCC VR-1525 / URRWXCal2) (Rickettsia azadi), this protein is Putative dioxygenase RF_0617.